The sequence spans 119 residues: Ribonuclease P protein component (119 aa).

Belongs to the RnpA family. As to quaternary structure, consists of a catalytic RNA component (M1 or rnpB) and a protein subunit.

It catalyses the reaction Endonucleolytic cleavage of RNA, removing 5'-extranucleotides from tRNA precursor.. RNaseP catalyzes the removal of the 5'-leader sequence from pre-tRNA to produce the mature 5'-terminus. It can also cleave other RNA substrates such as 4.5S RNA. The protein component plays an auxiliary but essential role in vivo by binding to the 5'-leader sequence and broadening the substrate specificity of the ribozyme. In Photorhabdus laumondii subsp. laumondii (strain DSM 15139 / CIP 105565 / TT01) (Photorhabdus luminescens subsp. laumondii), this protein is Ribonuclease P protein component.